We begin with the raw amino-acid sequence, 327 residues long: Embigin (327 aa).

An N-terminal signal peptide occupies residues 1 to 32 (MRALPGLLEARARTPRLLLLQCLLAAARPSSA). The Extracellular segment spans residues 33–260 (DGSAPDSPFT…ELVVLSYLVP (228 aa)). N-linked (GlcNAc...) asparagine glycans are attached at residues Asn54, Asn61, Asn75, Asn85, Asn100, Asn189, Asn196, Asn213, and Asn218. Ig-like V-type domains are found at residues 71–158 (PVEK…NFKV) and 159–253 (PELH…IELV). 2 cysteine pairs are disulfide-bonded: Cys88–Cys142 and Cys180–Cys237. Residues 261 to 281 (LKPFLVIVAEVILLVATILLC) form a helical membrane-spanning segment. At 282-327 (EKYTQKKKKHSDEGKEFEQIEQLKSDDSNGIENNVPRHRKNESLGQ) the chain is on the cytoplasmic side. The interval 287 to 327 (KKKKHSDEGKEFEQIEQLKSDDSNGIENNVPRHRKNESLGQ) is disordered. Positions 291 to 308 (HSDEGKEFEQIEQLKSDD) are enriched in basic and acidic residues. Ser309 carries the phosphoserine modification.

In terms of assembly, interacts with SLC16A1, SLC16A6 and SLC16A7.

The protein resides in the cell membrane. The protein localises to the synapse. Its function is as follows. Plays a role in the outgrowth of motoneurons and in the formation of neuromuscular junctions. Following muscle denervation, promotes nerve terminal sprouting and the formation of additional acetylcholine receptor clusters at synaptic sites without affecting terminal Schwann cell number or morphology. Delays the retraction of terminal sprouts following re-innervation of denervated endplates. May play a role in targeting the monocarboxylate transporters SLC16A1, SLC16A6 and SLC16A7 to the cell membrane. The protein is Embigin (EMB) of Homo sapiens (Human).